Reading from the N-terminus, the 348-residue chain is Protein RecA (348 aa).

64-71 is a binding site for ATP; the sequence is GPESSGKT. A compositionally biased stretch (basic and acidic residues) spans 326-335; that stretch reads EIDGTNKEPL. The disordered stretch occupies residues 326-348; it reads EIDGTNKEPLDENEETLSLLDDE. Residues 336–348 show a composition bias toward acidic residues; it reads DENEETLSLLDDE.

It belongs to the RecA family.

It is found in the cytoplasm. Functionally, can catalyze the hydrolysis of ATP in the presence of single-stranded DNA, the ATP-dependent uptake of single-stranded DNA by duplex DNA, and the ATP-dependent hybridization of homologous single-stranded DNAs. It interacts with LexA causing its activation and leading to its autocatalytic cleavage. The polypeptide is Protein RecA (Listeria innocua serovar 6a (strain ATCC BAA-680 / CLIP 11262)).